The sequence spans 629 residues: DNA-directed RNA polymerase subunit beta' (629 aa).

4 residues coordinate Zn(2+): cysteine 70, cysteine 72, cysteine 85, and cysteine 88. The Mg(2+) site is built by aspartate 472, aspartate 474, and aspartate 476.

This sequence belongs to the RNA polymerase beta' chain family. RpoC1 subfamily. In terms of assembly, in plastids the minimal PEP RNA polymerase catalytic core is composed of four subunits: alpha, beta, beta', and beta''. When a (nuclear-encoded) sigma factor is associated with the core the holoenzyme is formed, which can initiate transcription. The cofactor is Mg(2+). Requires Zn(2+) as cofactor.

It localises to the plastid. The protein localises to the chloroplast. The catalysed reaction is RNA(n) + a ribonucleoside 5'-triphosphate = RNA(n+1) + diphosphate. Its function is as follows. DNA-dependent RNA polymerase catalyzes the transcription of DNA into RNA using the four ribonucleoside triphosphates as substrates. This is DNA-directed RNA polymerase subunit beta' from Pyropia yezoensis (Susabi-nori).